Reading from the N-terminus, the 505-residue chain is Protein FAM114A2 (505 aa).

The segment at 1-65 is disordered; that stretch reads MSDKDDIETP…KPSSDLETSK (65 aa). A compositionally biased stretch (basic and acidic residues) spans 51 to 63; the sequence is KRPETKPSSDLET. Residues Ser-87, Ser-146, and Ser-209 each carry the phosphoserine modification. Residues 268 to 295 are a coiled coil; the sequence is LNSLSGEELETLKVELEQLKETFSLAEF. The disordered stretch occupies residues 342–366; the sequence is KSLTKPLAENEEGEKQSEAENTEQV.

It belongs to the FAM114 family.

In Homo sapiens (Human), this protein is Protein FAM114A2 (FAM114A2).